Consider the following 62-residue polypeptide: Alpha-toxin Tf4 (62 aa).

The region spanning 2–62 is the LCN-type CS-alpha/beta domain; sequence KEGYPADSKG…SVWDSATNKC (61 aa). 4 disulfide bridges follow: Cys12/Cys62, Cys16/Cys38, Cys24/Cys43, and Cys28/Cys45. Cys62 carries the cysteine amide modification.

In terms of tissue distribution, expressed by the venom gland.

The protein localises to the secreted. Functionally, alpha toxins bind voltage-independently at site-3 of sodium channels (Nav) and inhibit the inactivation of the activated channels, thereby blocking neuronal transmission. This toxin is toxic to frogs but non-toxic to insect larvae (T.molitor), mammals (rats) and crustaceans (crabs) at the doses assayed. The protein is Alpha-toxin Tf4 of Tityus fasciolatus (Central Brazilian scorpion).